A 529-amino-acid polypeptide reads, in one-letter code: Bifunctional purine biosynthesis protein PurH (529 aa).

The region spanning 1–148 (MQQHRPVRRA…KNHKDVAIVV (148 aa)) is the MGS-like domain.

Belongs to the PurH family.

It carries out the reaction (6R)-10-formyltetrahydrofolate + 5-amino-1-(5-phospho-beta-D-ribosyl)imidazole-4-carboxamide = 5-formamido-1-(5-phospho-D-ribosyl)imidazole-4-carboxamide + (6S)-5,6,7,8-tetrahydrofolate. The enzyme catalyses IMP + H2O = 5-formamido-1-(5-phospho-D-ribosyl)imidazole-4-carboxamide. The protein operates within purine metabolism; IMP biosynthesis via de novo pathway; 5-formamido-1-(5-phospho-D-ribosyl)imidazole-4-carboxamide from 5-amino-1-(5-phospho-D-ribosyl)imidazole-4-carboxamide (10-formyl THF route): step 1/1. It participates in purine metabolism; IMP biosynthesis via de novo pathway; IMP from 5-formamido-1-(5-phospho-D-ribosyl)imidazole-4-carboxamide: step 1/1. The protein is Bifunctional purine biosynthesis protein PurH of Erwinia tasmaniensis (strain DSM 17950 / CFBP 7177 / CIP 109463 / NCPPB 4357 / Et1/99).